The following is a 136-amino-acid chain: Large ribosomal subunit protein uL16 (136 aa).

The segment covering 1-17 (MLQPKRTKFRKRHKGRN) has biased composition (basic residues). A disordered region spans residues 1 to 21 (MLQPKRTKFRKRHKGRNRGLA).

Belongs to the universal ribosomal protein uL16 family. Part of the 50S ribosomal subunit.

Functionally, binds 23S rRNA and is also seen to make contacts with the A and possibly P site tRNAs. The polypeptide is Large ribosomal subunit protein uL16 (Buchnera aphidicola subsp. Acyrthosiphon kondoi (Acyrthosiphon kondoi symbiotic bacterium)).